The chain runs to 693 residues: Elongation factor G (693 aa).

The tr-type G domain maps to 8-283 (NRCRNIGIMA…AVVDYLPSPL (276 aa)). GTP contacts are provided by residues 17–24 (AHIDAGKT), 81–85 (DTPGH), and 135–138 (NKMD).

This sequence belongs to the TRAFAC class translation factor GTPase superfamily. Classic translation factor GTPase family. EF-G/EF-2 subfamily.

The protein resides in the cytoplasm. Its function is as follows. Catalyzes the GTP-dependent ribosomal translocation step during translation elongation. During this step, the ribosome changes from the pre-translocational (PRE) to the post-translocational (POST) state as the newly formed A-site-bound peptidyl-tRNA and P-site-bound deacylated tRNA move to the P and E sites, respectively. Catalyzes the coordinated movement of the two tRNA molecules, the mRNA and conformational changes in the ribosome. This chain is Elongation factor G, found in Acidobacterium capsulatum (strain ATCC 51196 / DSM 11244 / BCRC 80197 / JCM 7670 / NBRC 15755 / NCIMB 13165 / 161).